The chain runs to 879 residues: Alanine--tRNA ligase (879 aa).

Zn(2+) is bound by residues His-566, His-570, Cys-668, and His-672.

The protein belongs to the class-II aminoacyl-tRNA synthetase family. Zn(2+) is required as a cofactor.

The protein resides in the cytoplasm. The enzyme catalyses tRNA(Ala) + L-alanine + ATP = L-alanyl-tRNA(Ala) + AMP + diphosphate. In terms of biological role, catalyzes the attachment of alanine to tRNA(Ala) in a two-step reaction: alanine is first activated by ATP to form Ala-AMP and then transferred to the acceptor end of tRNA(Ala). Also edits incorrectly charged Ser-tRNA(Ala) and Gly-tRNA(Ala) via its editing domain. The protein is Alanine--tRNA ligase of Listeria welshimeri serovar 6b (strain ATCC 35897 / DSM 20650 / CCUG 15529 / CIP 8149 / NCTC 11857 / SLCC 5334 / V8).